The sequence spans 298 residues: MDSDASLVSSRPSSPEPDELFLAGRNKGGGGGGGGGGGFTGGTVSSSTQSDSPPELSAELRSAMSAAGVVVVDKLGFKSSSSSASSASSASSKKDKKQMTEPELQQLRLKINSRERKRMHDLNIAMDGLREVMPYAHGPSVRKLSKIATLLLARNYILMLTNSLEEMKRLVSEIYGGHHAAFHPAACPAGMGAHSAPLPAHPGHPASHPAHHPILPPAAVSSASLPGSGLSAVGSIRPPHGLLKSPSAAAAAPGLGGGFQHWGGMPCPCSMCQVAAPPHHHVSAMGGAALPRLASDAK.

A compositionally biased stretch (polar residues) spans 1–13; sequence MDSDASLVSSRPS. Disordered regions lie at residues 1 to 60 and 79 to 102; these read MDSD…SAEL and SSSS…MTEP. Residues 26-41 show a composition bias toward gly residues; it reads NKGGGGGGGGGGGFTG. Low complexity predominate over residues 79–91; it reads SSSSSASSASSAS. Positions 106-160 constitute a bHLH domain; it reads QLRLKINSRERKRMHDLNIAMDGLREVMPYAHGPSVRKLSKIATLLLARNYILML.

The protein localises to the nucleus. In terms of biological role, required for oligodendrocyte and motor neuron specification in the spinal cord. This chain is Oligodendrocyte transcription factor 2 (OLIG2), found in Gallus gallus (Chicken).